We begin with the raw amino-acid sequence, 75 residues long: Kappa-scoloptoxin(03)-Ssm1d (75 aa).

The N-terminal stretch at 1–23 is a signal peptide; the sequence is MKLSMAILLVMALIIFTLDKNYS.

The protein belongs to the scoloptoxin-03 family. Contains 3 disulfide bonds. Expressed by the venom gland.

It localises to the secreted. Functionally, inhibits voltage-gated potassium channels. The polypeptide is Kappa-scoloptoxin(03)-Ssm1d (Scolopendra mutilans (Chinese red-headed centipede)).